The chain runs to 183 residues: Adenine phosphoribosyltransferase (183 aa).

Belongs to the purine/pyrimidine phosphoribosyltransferase family. In terms of assembly, homodimer.

The protein resides in the cytoplasm. It catalyses the reaction AMP + diphosphate = 5-phospho-alpha-D-ribose 1-diphosphate + adenine. The protein operates within purine metabolism; AMP biosynthesis via salvage pathway; AMP from adenine: step 1/1. Functionally, catalyzes a salvage reaction resulting in the formation of AMP, that is energically less costly than de novo synthesis. In Cronobacter sakazakii (strain ATCC BAA-894) (Enterobacter sakazakii), this protein is Adenine phosphoribosyltransferase.